Here is a 676-residue protein sequence, read N- to C-terminus: MTQVAKKILVTCALPYANGSIHLGHMLEHIQADIWVRYQRMRGNQVYFICADDAHGTPIMLKAQQMGVAPEQMIADMSQEHQTDFAGFNISYDNYHSTHSEENRELSELIYTRLKENGFIKNRTISQLYDPEKGMFLPDRFVKGTCPNCKSPDQYGDNCEVCSATYSPTELIEPKSVVSGATPVLRDSEHFFFDLPEFSAMLQAWTRSGALQEQVANKMQEWFDSGLQQWDISRDAPYFGFEIPGAPGKYFYVWLDAPIGYMGSFKNLCDKRGDIDFDAFWQKDSDAELYHFIGKDIVYFHSLFWPAMLEGSQFRKPTNLFVHGYVTVNGAKMSKSRGTFIKASTWLQHLDADSLRYYYAAKLSSRIDDIDLNLEDFVQRVNADIVNKVVNLASRNAGFINKRFAGQLSAELADPALYQTFIDASTSIAQAWSSREFSRAVREIMALADAANRYVDEQAPWVVAKQEGRDADLQAICSMGINLFRVLMTWLKPVMPSLAERAEAFLNQPLTWDGIEQPLLNHNIAAFKALYNRIEMDKVNGLIAASKEDTAAAQPAVTGPLADDPLQETISFDDFAKVDMRIALIENAELVDGSDKLLRLTLDIGGEKRNVFSGIRAAYPDPALLVGRLTVMVANLAPRKMRFGLSEGMVMAAGPGGKDIFLLSPDSGAQPGQQVK.

Residues 15–25 (PYANGSIHLGH) carry the 'HIGH' region motif. Positions 146, 149, 159, and 162 each coordinate Zn(2+). The 'KMSKS' region motif lies at 332-336 (KMSKS). An ATP-binding site is contributed by lysine 335. In terms of domain architecture, tRNA-binding spans 574 to 676 (DFAKVDMRIA…SGAQPGQQVK (103 aa)).

This sequence belongs to the class-I aminoacyl-tRNA synthetase family. MetG type 1 subfamily. In terms of assembly, homodimer. The cofactor is Zn(2+).

The protein resides in the cytoplasm. The catalysed reaction is tRNA(Met) + L-methionine + ATP = L-methionyl-tRNA(Met) + AMP + diphosphate. In terms of biological role, is required not only for elongation of protein synthesis but also for the initiation of all mRNA translation through initiator tRNA(fMet) aminoacylation. This is Methionine--tRNA ligase from Erwinia tasmaniensis (strain DSM 17950 / CFBP 7177 / CIP 109463 / NCPPB 4357 / Et1/99).